A 302-amino-acid polypeptide reads, in one-letter code: Protoheme IX farnesyltransferase 2 (302 aa).

Helical transmembrane passes span 14-34, 36-56, 85-105, 108-128, 133-153, 163-183, 209-229, 230-250, and 264-284; these read IIFG…QGSV, WWLL…GCAI, AALA…WFCT, LATG…SLYM, VYGT…GYCA, AILL…IAIF, IVLY…GGYA, GYGY…MALS, and QVFF…AVDG.

This sequence belongs to the UbiA prenyltransferase family. Protoheme IX farnesyltransferase subfamily.

Its subcellular location is the cell inner membrane. The enzyme catalyses heme b + (2E,6E)-farnesyl diphosphate + H2O = Fe(II)-heme o + diphosphate. The protein operates within porphyrin-containing compound metabolism; heme O biosynthesis; heme O from protoheme: step 1/1. Its function is as follows. Converts heme B (protoheme IX) to heme O by substitution of the vinyl group on carbon 2 of heme B porphyrin ring with a hydroxyethyl farnesyl side group. In Chromobacterium violaceum (strain ATCC 12472 / DSM 30191 / JCM 1249 / CCUG 213 / NBRC 12614 / NCIMB 9131 / NCTC 9757 / MK), this protein is Protoheme IX farnesyltransferase 2.